We begin with the raw amino-acid sequence, 1417 residues long: Cytoadherence-linked asexual protein 3.1 (1417 aa).

The first 24 residues, 1–24, serve as a signal peptide directing secretion; it reads MVSFFKTPIFILIIFLYLNEKVIC. 4 cysteine pairs are disulfide-bonded: C333–C361, C407–C413, C517–C545, and C521–C542. The helical transmembrane segment at 1204-1224 threads the bilayer; sequence LANGFMYAFCFFAISQMYAYF. Residues 1383 to 1417 are disordered; that stretch reads TYIDTEKMNEADSADSDDEKDSDTPDDELMISRFH. The segment covering 1394-1411 has biased composition (acidic residues); the sequence is DSADSDDEKDSDTPDDEL.

In terms of assembly, self-associates. Component of the RhopH complex. RhopH complex is at least composed of CLAG3.1/CLAG3.2, RhopH2 and RhopH3 with a 1:1:1 subunit stoichiometry. CLAG3.1/CLAG3.2 mediates subunit association through independent contacts with RhopH2 and RhopH3, which do not directly interact with one another. Interacts with RhopH2. Interacts with RhopH3.

The protein resides in the host cell membrane. Its subcellular location is the host cytoplasm. The protein localises to the cytoplasmic vesicle. It is found in the secretory vesicle. It localises to the rhoptry. In terms of biological role, participates in the formation of new permeability pathways in Plasmodium-infected erythrocytes enabling the uptake of nutrients from the blood plasma. The sequence is that of Cytoadherence-linked asexual protein 3.1 from Plasmodium falciparum.